A 519-amino-acid polypeptide reads, in one-letter code: Apolipoprotein N-acyltransferase (519 aa).

Transmembrane regions (helical) follow at residues 6-26 (APLGWTYVAWFGQIPLWIWIF), 47-67 (LTAIAWGGGFYGVALFWITGV), 83-103 (IAAFCWLAITAWGVVLVFVWL), 126-146 (LFILWGTASWCGLETLWSHSI), 174-194 (LLSAFIVAVNGFLALGLIDFL), and 206-226 (WHYFLIAILIWLFCQGGGWLL). The CN hydrolase domain maps to 244–482 (IQGNIPNQIK…YEIHAAPIYR (239 aa)). Catalysis depends on Glu285, which acts as the Proton acceptor. Lys343 is a catalytic residue. Residue Cys394 is the Nucleophile of the active site. The chain crosses the membrane as a helical span at residues 496-516 (VVFLLLVVSAIAWLYQIVFPL).

This sequence belongs to the CN hydrolase family. Apolipoprotein N-acyltransferase subfamily.

The protein resides in the cell inner membrane. The catalysed reaction is N-terminal S-1,2-diacyl-sn-glyceryl-L-cysteinyl-[lipoprotein] + a glycerophospholipid = N-acyl-S-1,2-diacyl-sn-glyceryl-L-cysteinyl-[lipoprotein] + a 2-acyl-sn-glycero-3-phospholipid + H(+). The protein operates within protein modification; lipoprotein biosynthesis (N-acyl transfer). Catalyzes the phospholipid dependent N-acylation of the N-terminal cysteine of apolipoprotein, the last step in lipoprotein maturation. This chain is Apolipoprotein N-acyltransferase, found in Synechocystis sp. (strain ATCC 27184 / PCC 6803 / Kazusa).